Reading from the N-terminus, the 484-residue chain is ATP synthase subunit beta (484 aa).

168–175 (GGAGVGKT) lines the ATP pocket.

The protein belongs to the ATPase alpha/beta chains family. In terms of assembly, F-type ATPases have 2 components, CF(1) - the catalytic core - and CF(0) - the membrane proton channel. CF(1) has five subunits: alpha(3), beta(3), gamma(1), delta(1), epsilon(1). CF(0) has three main subunits: a(1), b(2) and c(9-12). The alpha and beta chains form an alternating ring which encloses part of the gamma chain. CF(1) is attached to CF(0) by a central stalk formed by the gamma and epsilon chains, while a peripheral stalk is formed by the delta and b chains.

The protein resides in the cell membrane. The catalysed reaction is ATP + H2O + 4 H(+)(in) = ADP + phosphate + 5 H(+)(out). In terms of biological role, produces ATP from ADP in the presence of a proton gradient across the membrane. The catalytic sites are hosted primarily by the beta subunits. This chain is ATP synthase subunit beta, found in Arthrobacter sp. (strain FB24).